We begin with the raw amino-acid sequence, 520 residues long: Arabinose import ATP-binding protein AraG (520 aa).

Polar residues predominate over residues 1-10 (MTTQTMTAVS). Positions 1 to 27 (MTTQTMTAVSGNDGDTGGDAAESPPGG) are disordered. 2 consecutive ABC transporter domains span residues 30-265 (LALD…MVGR) and 265-516 (RSIE…LIKL). 62–69 (GENGAGKS) lines the ATP pocket.

It belongs to the ABC transporter superfamily. Arabinose importer (TC 3.A.1.2.2) family. In terms of assembly, the complex is composed of two ATP-binding proteins (AraG), two transmembrane proteins (AraH) and a solute-binding protein (AraF).

It localises to the cell inner membrane. It carries out the reaction L-arabinose(out) + ATP + H2O = L-arabinose(in) + ADP + phosphate + H(+). Part of the ABC transporter complex AraFGH involved in L-arabinose import. Responsible for energy coupling to the transport system. The chain is Arabinose import ATP-binding protein AraG from Azospirillum brasilense.